A 697-amino-acid polypeptide reads, in one-letter code: Potassium-transporting ATPase ATP-binding subunit (697 aa).

4 helical membrane passes run 55–75 (PIMF…FLPS), 79–99 (SIPG…VLFA), 245–265 (LTLI…YLGF), and 271–291 (VLVA…LSAI). Asp324 acts as the 4-aspartylphosphate intermediate in catalysis. ATP contacts are provided by residues Asp361, Glu365, 393-400 (FKAETRMS), and Lys412. Residues Asp535 and Asp539 each contribute to the Mg(2+) site. 3 helical membrane-spanning segments follow: residues 605–625 (FAII…LNIM), 633–653 (AILS…PLAM), and 677–697 (GGVI…GLFI).

The protein belongs to the cation transport ATPase (P-type) (TC 3.A.3) family. Type IA subfamily. In terms of assembly, the system is composed of three essential subunits: KdpA, KdpB and KdpC.

The protein localises to the cell membrane. The enzyme catalyses K(+)(out) + ATP + H2O = K(+)(in) + ADP + phosphate + H(+). Functionally, part of the high-affinity ATP-driven potassium transport (or Kdp) system, which catalyzes the hydrolysis of ATP coupled with the electrogenic transport of potassium into the cytoplasm. This subunit is responsible for energy coupling to the transport system and for the release of the potassium ions to the cytoplasm. This chain is Potassium-transporting ATPase ATP-binding subunit, found in Bacillus anthracis (strain CDC 684 / NRRL 3495).